Reading from the N-terminus, the 114-residue chain is Nucleoid-associated protein SGR_3378 (114 aa).

The protein belongs to the YbaB/EbfC family. Homodimer.

Its subcellular location is the cytoplasm. It localises to the nucleoid. Functionally, binds to DNA and alters its conformation. May be involved in regulation of gene expression, nucleoid organization and DNA protection. This chain is Nucleoid-associated protein SGR_3378, found in Streptomyces griseus subsp. griseus (strain JCM 4626 / CBS 651.72 / NBRC 13350 / KCC S-0626 / ISP 5235).